Here is a 223-residue protein sequence, read N- to C-terminus: Ethylene-inducing xylanase 1 (223 aa).

Residues 1 to 19 form the signal peptide; it reads MVSFTSLLAAFSVVSGVLT. Positions 34–223 constitute a GH11 domain; sequence KRTPSSTGTS…SSGSATMTVS (190 aa). Glu-119 (nucleophile) is an active-site residue. The nuclear localization signal stretch occupies residues 174–184; the sequence is RRTKRTSGSVN. Glu-210 acts as the Proton donor in catalysis.

The protein belongs to the glycosyl hydrolase 11 (cellulase G) family.

The protein resides in the secreted. It is found in the host nucleus. The catalysed reaction is Endohydrolysis of (1-&gt;4)-beta-D-xylosidic linkages in xylans.. It participates in glycan degradation; xylan degradation. Its function is as follows. Endo-1,4-beta-xylanase involved in the hydrolysis of xylan, a major structural heterogeneous polysaccharide found in plant biomass representing the second most abundant polysaccharide in the biosphere, after cellulose. Acts as an effector that localizes to the host nucleus to contribute to the virulence process. Induces host innate immunity responses; triggers BAK1-and SOBIR1-dependent cell death, salicylic acid signaling and jasmonic acid signaling. Does not exhibit any cell death when transiently expressed in N.benthamiana. This Verticillium dahliae (strain VdLs.17 / ATCC MYA-4575 / FGSC 10137) (Verticillium wilt) protein is Ethylene-inducing xylanase 1.